Here is a 118-residue protein sequence, read N- to C-terminus: Large ribosomal subunit protein bL17 (118 aa).

This sequence belongs to the bacterial ribosomal protein bL17 family. In terms of assembly, part of the 50S ribosomal subunit. Contacts protein L32.

This chain is Large ribosomal subunit protein bL17, found in Hydrogenobaculum sp. (strain Y04AAS1).